Reading from the N-terminus, the 147-residue chain is Ubiquitin-conjugating enzyme E2 4 (147 aa).

The UBC core domain maps to 1-147 (MALKRINREL…AREWTRKYAI (147 aa)). Cys-85 acts as the Glycyl thioester intermediate in catalysis.

The protein belongs to the ubiquitin-conjugating enzyme family. As to quaternary structure, interacts with the E1 ubiquitin-activating enzyme ptr3 and E3 ubiquitin-protein ligase pub2.

The catalysed reaction is S-ubiquitinyl-[E1 ubiquitin-activating enzyme]-L-cysteine + [E2 ubiquitin-conjugating enzyme]-L-cysteine = [E1 ubiquitin-activating enzyme]-L-cysteine + S-ubiquitinyl-[E2 ubiquitin-conjugating enzyme]-L-cysteine.. The protein operates within protein modification; protein ubiquitination. Functionally, E2 ubiquitin-conjugating enzyme that catalyzes the covalent attachment of ubiquitin to other proteins. Mediates the selective degradation of short-lived and abnormal proteins. Mediates ubiquitination of pex5. The polypeptide is Ubiquitin-conjugating enzyme E2 4 (ubc4) (Schizosaccharomyces pombe (strain 972 / ATCC 24843) (Fission yeast)).